Reading from the N-terminus, the 224-residue chain is Non-structural protein V (224 aa).

Positions 54–65 are enriched in polar residues; that stretch reads QKNIQHPTASHQ. Disordered regions lie at residues 54-96 and 150-171; these read QKNI…DPEP and TEFK…GGHR. Residues H170, C189, C193, C205, C207, C210, C214, and C217 each coordinate Zn(2+).

Belongs to the paramyxoviruses V protein family. Interacts with host IFIH1/MDA5 and DHX58/LGP2. Forms with host DDB1, CUL4A, STAT1, STAT2 and STAT3 the mumps virus V-dependent complex (VDC).

It localises to the virion. It is found in the host cytoplasm. Plays an essential role in the inhibition of host immune response. Prevents the establishment of cellular antiviral state by blocking interferon-alpha/beta (IFN-alpha/beta) production and signaling pathway. Interacts with host IFIH1/MDA5 and DHX58/LGP2 to inhibit the transduction pathway involved in the activation of IFN-beta promoter, thus protecting the virus against cell antiviral state. Blocks the type I and II interferon signaling pathways by interacting with host STAT1, STAT2 and STAT3, and mediating their ubiquitination and subsequent proteasomal degradation. This chain is Non-structural protein V, found in Mumps virus (strain SBL) (MuV).